The primary structure comprises 153 residues: SsrA-binding protein (153 aa).

This sequence belongs to the SmpB family.

Its subcellular location is the cytoplasm. Required for rescue of stalled ribosomes mediated by trans-translation. Binds to transfer-messenger RNA (tmRNA), required for stable association of tmRNA with ribosomes. tmRNA and SmpB together mimic tRNA shape, replacing the anticodon stem-loop with SmpB. tmRNA is encoded by the ssrA gene; the 2 termini fold to resemble tRNA(Ala) and it encodes a 'tag peptide', a short internal open reading frame. During trans-translation Ala-aminoacylated tmRNA acts like a tRNA, entering the A-site of stalled ribosomes, displacing the stalled mRNA. The ribosome then switches to translate the ORF on the tmRNA; the nascent peptide is terminated with the 'tag peptide' encoded by the tmRNA and targeted for degradation. The ribosome is freed to recommence translation, which seems to be the essential function of trans-translation. This is SsrA-binding protein from Pelotomaculum thermopropionicum (strain DSM 13744 / JCM 10971 / SI).